The primary structure comprises 439 residues: Putrescine transporter PotE (439 aa).

A run of 12 helical transmembrane segments spans residues Gly10–Leu30, Ile40–Ala60, Thr91–Gly111, Leu114–Ile134, Ile152–Phe172, Ala186–Leu206, Ile225–Ile245, Val276–Ile296, Ala321–Ile341, Asn354–Ile374, Val387–Gly407, and Ala410–Pro430.

The protein belongs to the amino acid-polyamine-organocation (APC) superfamily. Basic amino acid/polyamine antiporter (APA) (TC 2.A.3.2) family.

Its subcellular location is the cell inner membrane. The catalysed reaction is putrescine(in) + H(+)(in) = putrescine(out) + H(+)(out). The enzyme catalyses putrescine(in) + L-ornithine(out) = putrescine(out) + L-ornithine(in). Its function is as follows. Catalyzes both the uptake and excretion of putrescine. The uptake of putrescine is dependent on the membrane potential and the excretion involves putrescine-ornithine antiporter activity. This chain is Putrescine transporter PotE, found in Escherichia coli O6:H1 (strain CFT073 / ATCC 700928 / UPEC).